Reading from the N-terminus, the 226-residue chain is PKHD-type hydroxylase HNE_2117 (226 aa).

The Fe2OG dioxygenase domain occupies 78-178 (TVLTPRFNRY…RLASFLWTQS (101 aa)). Fe cation contacts are provided by His-96, Asp-98, and His-159. Arg-169 is a binding site for 2-oxoglutarate.

Fe(2+) is required as a cofactor. L-ascorbate serves as cofactor.

This Hyphomonas neptunium (strain ATCC 15444) protein is PKHD-type hydroxylase HNE_2117.